The primary structure comprises 779 residues: Molybdenum cofactor sulfurase (779 aa).

Position 247 is an N6-(pyridoxal phosphate)lysine (Lys-247). The active site involves Cys-409. One can recognise an MOSC domain in the interval 624–779 (SQSLGLEGVR…LTCGDVIVVS (156 aa)). At Ser-732 the chain carries Phosphoserine.

The protein belongs to the class-V pyridoxal-phosphate-dependent aminotransferase family. MOCOS subfamily. Pyridoxal 5'-phosphate serves as cofactor.

The catalysed reaction is Mo-molybdopterin + L-cysteine + AH2 = thio-Mo-molybdopterin + L-alanine + A + H2O. It functions in the pathway cofactor biosynthesis; molybdopterin biosynthesis. Sulfurates the molybdenum cofactor. Sulfation of molybdenum is essential for xanthine dehydrogenase (XDH) and aldehyde oxidase (ADO) enzymes in which molybdenum cofactor is liganded by 1 oxygen and 1 sulfur atom in active form. This chain is Molybdenum cofactor sulfurase, found in Drosophila mojavensis (Fruit fly).